The primary structure comprises 154 residues: 3-hydroxyacyl-[acyl-carrier-protein] dehydratase FabZ (154 aa).

Residue His-60 is part of the active site.

This sequence belongs to the thioester dehydratase family. FabZ subfamily.

It is found in the cytoplasm. It catalyses the reaction a (3R)-hydroxyacyl-[ACP] = a (2E)-enoyl-[ACP] + H2O. Its function is as follows. Involved in unsaturated fatty acids biosynthesis. Catalyzes the dehydration of short chain beta-hydroxyacyl-ACPs and long chain saturated and unsaturated beta-hydroxyacyl-ACPs. The polypeptide is 3-hydroxyacyl-[acyl-carrier-protein] dehydratase FabZ (Actinobacillus pleuropneumoniae serotype 5b (strain L20)).